A 36-amino-acid polypeptide reads, in one-letter code: Cytochrome b6-f complex subunit 7 (36 aa).

The helical transmembrane segment at 9–29 (NGAFIMIGLTLLGLAWGFVII) threads the bilayer.

This sequence belongs to the PetM family. As to quaternary structure, the 4 large subunits of the cytochrome b6-f complex are cytochrome b6, subunit IV (17 kDa polypeptide, PetD), cytochrome f and the Rieske protein, while the 4 small subunits are PetG, PetL, PetM and PetN. The complex functions as a dimer.

The protein localises to the cellular thylakoid membrane. Its function is as follows. Component of the cytochrome b6-f complex, which mediates electron transfer between photosystem II (PSII) and photosystem I (PSI), cyclic electron flow around PSI, and state transitions. This Synechocystis sp. (strain ATCC 27184 / PCC 6803 / Kazusa) protein is Cytochrome b6-f complex subunit 7.